A 651-amino-acid chain; its full sequence is Probable Xaa-Pro aminopeptidase P (651 aa).

The Mn(2+) site is built by Asp-448, Asp-459, Glu-557, and Glu-571.

It belongs to the peptidase M24B family. Mn(2+) serves as cofactor.

The catalysed reaction is Release of any N-terminal amino acid, including proline, that is linked to proline, even from a dipeptide or tripeptide.. In terms of biological role, catalyzes the removal of a penultimate prolyl residue from the N-termini of peptides. This Coccidioides posadasii (strain C735) (Valley fever fungus) protein is Probable Xaa-Pro aminopeptidase P (AMPP).